Reading from the N-terminus, the 203-residue chain is Glycerol-3-phosphate acyltransferase (203 aa).

Helical transmembrane passes span 5 to 25 (IIYL…LAQI), 58 to 78 (TLAV…ILMA), 87 to 107 (ILWT…YLKF), 118 to 138 (GVLA…WFII), 150 to 170 (LGAM…IPVI), and 176 to 196 (IFII…RLIG).

This sequence belongs to the PlsY family. Probably interacts with PlsX.

Its subcellular location is the cell inner membrane. It carries out the reaction an acyl phosphate + sn-glycerol 3-phosphate = a 1-acyl-sn-glycero-3-phosphate + phosphate. The protein operates within lipid metabolism; phospholipid metabolism. Catalyzes the transfer of an acyl group from acyl-phosphate (acyl-PO(4)) to glycerol-3-phosphate (G3P) to form lysophosphatidic acid (LPA). This enzyme utilizes acyl-phosphate as fatty acyl donor, but not acyl-CoA or acyl-ACP. The polypeptide is Glycerol-3-phosphate acyltransferase (Campylobacter lari (strain RM2100 / D67 / ATCC BAA-1060)).